The chain runs to 146 residues: MTKKIEEKIEGVIESLGYLLYDVSLIKENEQHVLRVSLKNPNGAVSLDICQQVSEIISPLLDVCDFIQDAYILEVSSMGLERTLKTPKHFKLSLGEKVEVKLTNKESFQAVLKDANDLSADFELEDHAIKSVEYKDLKKVKTLFEW.

It belongs to the RimP family.

It localises to the cytoplasm. Functionally, required for maturation of 30S ribosomal subunits. This chain is Ribosome maturation factor RimP, found in Helicobacter pylori (strain Shi470).